The primary structure comprises 165 residues: Transcription antitermination protein NusB (165 aa).

This sequence belongs to the NusB family.

In terms of biological role, involved in transcription antitermination. Required for transcription of ribosomal RNA (rRNA) genes. Binds specifically to the boxA antiterminator sequence of the ribosomal RNA (rrn) operons. The polypeptide is Transcription antitermination protein NusB (Rhodococcus erythropolis (strain PR4 / NBRC 100887)).